The sequence spans 63 residues: Large ribosomal subunit protein bL32 (63 aa).

The interval 1-20 (MANPKAKMSKSRRDKRRAQF) is disordered. Basic residues predominate over residues 7-18 (KMSKSRRDKRRA).

It belongs to the bacterial ribosomal protein bL32 family.

The chain is Large ribosomal subunit protein bL32 from Chlorobaculum parvum (strain DSM 263 / NCIMB 8327) (Chlorobium vibrioforme subsp. thiosulfatophilum).